We begin with the raw amino-acid sequence, 258 residues long: MMFKNFPFFKGKKDTSFDHLVEEVKKGYIPEHIAIIMDGNGRWAKRRAMPRIAGHHEGMQVVKKITKFASKLNVKVLTLYAFSTENWKRPKKEVDYLMKLPEEFLGTFLPELIEENVQVRVIGQKDRLPTHTRRAMEKAMEDTKENTGLILNFALNYGSRDEIVSAVQHMMKDNEEGKIRSEEVSEEMLSSYLMTSSLPDPELLIRTSGELRISNFMLWQIAYSEFWFTDVYWPDFKEEHLLNAITDFQHRGRRFGGV.

Asp-38 is an active-site residue. Asp-38 is a binding site for Mg(2+). Substrate-binding positions include 39–42, Trp-43, Arg-51, His-55, and 83–85; these read GNGR and STE. Catalysis depends on Asn-86, which acts as the Proton acceptor. Substrate contacts are provided by residues Trp-87, Arg-89, Arg-206, and 212-214; that span reads RIS. Residue Glu-225 participates in Mg(2+) binding.

It belongs to the UPP synthase family. Homodimer. Mg(2+) is required as a cofactor.

Catalyzes the condensation of isopentenyl diphosphate (IPP) with allylic pyrophosphates generating different type of terpenoids. This is Isoprenyl transferase from Bacillus cereus (strain ATCC 14579 / DSM 31 / CCUG 7414 / JCM 2152 / NBRC 15305 / NCIMB 9373 / NCTC 2599 / NRRL B-3711).